Reading from the N-terminus, the 534-residue chain is Arginine--tRNA ligase (534 aa).

A 'HIGH' region motif is present at residues 120–130; that stretch reads ANPTGFLHLGH.

The protein belongs to the class-I aminoacyl-tRNA synthetase family. As to quaternary structure, monomer.

The protein resides in the cytoplasm. The catalysed reaction is tRNA(Arg) + L-arginine + ATP = L-arginyl-tRNA(Arg) + AMP + diphosphate. This is Arginine--tRNA ligase from Mesomycoplasma hyopneumoniae (strain 7448) (Mycoplasma hyopneumoniae).